The sequence spans 294 residues: tRNA pseudouridine synthase B (294 aa).

The Nucleophile role is filled by D38.

Belongs to the pseudouridine synthase TruB family. Type 1 subfamily.

It carries out the reaction uridine(55) in tRNA = pseudouridine(55) in tRNA. In terms of biological role, responsible for synthesis of pseudouridine from uracil-55 in the psi GC loop of transfer RNAs. This is tRNA pseudouridine synthase B from Clostridium perfringens (strain SM101 / Type A).